The sequence spans 427 residues: Inward rectifier potassium channel 2 (427 aa).

Topologically, residues 1–81 (MGSVRTNRYS…IFTTCVDIRW (81 aa)) are cytoplasmic. An S-nitrosocysteine modification is found at Cys76. A helical transmembrane segment spans residues 82-106 (RWMLVIFCLAFVLSWLFFGCVFWLI). The Extracellular portion of the chain corresponds to 107 to 128 (ALLHGDLDASRESKACVSEVNS). The segment at residues 129–140 (FTAAFLFSIETQ) is an intramembrane region (helical; Pore-forming). Residues 141-147 (TTIGYGF) constitute an intramembrane region (pore-forming). The Selectivity filter motif lies at 142–147 (TIGYGF). Residues 148 to 156 (RCVTDECPV) are Extracellular-facing. The helical transmembrane segment at 157–178 (AVFMVVFQSIVGCIIDAFIIGA) threads the bilayer. The Cytoplasmic portion of the chain corresponds to 179-427 (VMAKMAKPKK…PRPLRRESEI (249 aa)). The polyphosphoinositide (PIP2)-binding stretch occupies residues 181-208 (AKMAKPKKRNETLVFSHNAVIAMRDGKL). The disordered stretch occupies residues 384-427 (SKEEDDSENGVPESTSTDTPPDIDLHNQASVPLEPRPLRRESEI). Positions 425 to 427 (SEI) match the PDZ-binding motif.

It belongs to the inward rectifier-type potassium channel (TC 1.A.2.1) family. KCNJ2 subfamily. Homotetramer. Homomultimeric and heteromultimeric association with KCNJ4/Kir2.3. Can form heteromeric channels with Kir2.6/KCNJ18. Associates, via its PDZ-recognition domain, with a complex containing LIN7A, LIN7B, LIN7C, DLG1, CASK and APBA1. In terms of processing, S-nitrosylation increases the open probability and inward rectifying currents. Highly expressed in the ventricle and skeletal muscle, moderately in cerebrum and cerebellum. Only low levels are detected in kidney or lung.

It localises to the cell membrane. The protein resides in the sarcolemma. It is found in the T-tubule. It carries out the reaction K(+)(in) = K(+)(out). With respect to regulation, activated by phosphatidylinositol 4,5 biphosphate (PtdIns(4,5)P2). Inward rectifier potassium channels are characterized by a greater tendency to allow potassium to flow into the cell rather than out of it. Their voltage dependence is regulated by the concentration of extracellular potassium; as external potassium is raised, the voltage range of the channel opening shifts to more positive voltages. The inward rectification is mainly due to the blockage of outward current by internal magnesium. Can be blocked by extracellular barium and cesium. Probably participates in establishing action potential waveform and excitability of neuronal and muscle tissues. The protein is Inward rectifier potassium channel 2 (KCNJ2) of Oryctolagus cuniculus (Rabbit).